The chain runs to 568 residues: Periplasmic trehalase (568 aa).

The signal sequence occupies residues 1–38; that stretch reads MPHAPARSGDAMSAAAPPCCTSLLGLSLSMFVAPCALA. Substrate-binding positions include Arg169, 176–177, Asn213, 222–224, 294–296, and Gly327; these read WD, RSQ, and RPE. Residues Asp329 and Glu511 each act as proton donor/acceptor in the active site. Substrate is bound at residue Glu526.

This sequence belongs to the glycosyl hydrolase 37 family.

The protein resides in the periplasm. The catalysed reaction is alpha,alpha-trehalose + H2O = alpha-D-glucose + beta-D-glucose. Its function is as follows. Provides the cells with the ability to utilize trehalose at high osmolarity by splitting it into glucose molecules that can subsequently be taken up by the phosphotransferase-mediated uptake system. The polypeptide is Periplasmic trehalase (Xanthomonas campestris pv. campestris (strain 8004)).